A 706-amino-acid chain; its full sequence is Polyribonucleotide nucleotidyltransferase (706 aa).

The Mg(2+) site is built by Asp-487 and Asp-493. The KH domain maps to 553-612 (PRLFTMKINQDKIREVIGKGGETIRAITAETGTEINIAEDGTITIAATTQEAGDAAKKRI). One can recognise an S1 motif domain in the interval 622-692 (GKVYEGTVVK…DRGRVRLSIK (71 aa)).

It belongs to the polyribonucleotide nucleotidyltransferase family. Requires Mg(2+) as cofactor.

It localises to the cytoplasm. The enzyme catalyses RNA(n+1) + phosphate = RNA(n) + a ribonucleoside 5'-diphosphate. In terms of biological role, involved in mRNA degradation. Catalyzes the phosphorolysis of single-stranded polyribonucleotides processively in the 3'- to 5'-direction. In Neisseria meningitidis serogroup A / serotype 4A (strain DSM 15465 / Z2491), this protein is Polyribonucleotide nucleotidyltransferase.